Here is a 204-residue protein sequence, read N- to C-terminus: Dof zinc finger protein DOF3.1 (204 aa).

Residues 1–25 form a disordered region; that stretch reads MQDPAAYYQTMMAKQQQQQQPQFAE. The Dof-type zinc finger occupies 29–83; sequence LKCPRCDSPNTKFCYYNNYNLSQPRHFCKSCRRYWTKGGALRNVPVGGGSRKNAT. Residues C31, C34, C56, and C59 each contribute to the Zn(2+) site. 2 disordered regions span residues 70 to 128 and 182 to 204; these read RNVP…TRML and RTEP…AEKN. Over residues 84-102 the composition is skewed to low complexity; the sequence is KRSTSSSSSASSPSNSSQN. The segment covering 106 to 124 has biased composition (basic and acidic residues); the sequence is KNPDPDPDPRNSQKPDLDP.

The protein localises to the nucleus. Transcription factor that binds specifically to a 5'-AA[AG]G-3' consensus core sequence. The polypeptide is Dof zinc finger protein DOF3.1 (DOF3.1) (Arabidopsis thaliana (Mouse-ear cress)).